Here is a 533-residue protein sequence, read N- to C-terminus: MAGKRVAVIGAGASGLACIKCCLEEGLEPVCFERTDDIGGLWRFQESPDEGRASIYKSVIINTSKEMMCFSDYPIPDHFPNFMHNSQVLEYFRMYAKEFGLLKYIQFKTTVCSVKKRPDFSTSGQWEVLTECEGKKESAVFDGVLVCTGHHTSAHLPLESFPGIEKFKGQYLHSRDYKNPEKFTGKRVIVIGIGNSGGDLAVEISHTAKQVFLSTRRGAWIMNRVGDHGYPIDILLSSRFSQFLKKITGETIANSFLERKMNQRFDHAMFGLKPKHRALSQHPTVNDDLPNRIISGSVKIKGNVKEFTETAAIFEDGSREDDIDAVIFATGYSFSFPFLEDSVKVVKNKVSLYKKVFPPNLEKPTLAIIGLIQPLGAIMPISELQARWATLVFKGLKTLPSQSEMMTEISQVQEKMAKRYVESQRHTIQGDYIETMEEIADLVGVRPNLLSLAFTDPRLALQLLLGPCTPVHYRLQGRGKWDGARKTILTVEDRIRKPLMTRVTESSNSVTSMMTMGKFMLAIAFLAIAVVYF.

At Arg5 the chain carries Dimethylated arginine. Residues 10–14, Glu33, and 41–42 contribute to the FAD site; these read GAGAS and LW. Ser54 is subject to Phosphoserine. Phosphotyrosine is present on Tyr56. A Phosphoserine modification is found at Ser58. 62 to 63 lines the FAD pocket; that stretch reads NT. 196-199 is an NADP(+) binding site; sequence SGGD. Ser280 bears the Phosphoserine mark. Thr284 bears the Phosphothreonine mark. Ser401 carries the post-translational modification Phosphoserine. A helical membrane pass occupies residues 513–533; that stretch reads MMTMGKFMLAIAFLAIAVVYF.

Belongs to the FMO family. Requires FAD as cofactor. As to expression, kidney and liver.

The protein resides in the microsome membrane. It is found in the endoplasmic reticulum membrane. The catalysed reaction is N,N-dimethylaniline + NADPH + O2 + H(+) = N,N-dimethylaniline N-oxide + NADP(+) + H2O. The enzyme catalyses NADPH + O2 + H(+) = H2O2 + NADP(+). It catalyses the reaction heptan-2-one + NADPH + O2 + H(+) = pentyl acetate + NADP(+) + H2O. It carries out the reaction octan-3-one + NADPH + O2 + H(+) = pentyl propanoate + NADP(+) + H2O. The catalysed reaction is octan-3-one + NADPH + O2 + H(+) = ethyl hexanoate + NADP(+) + H2O. The enzyme catalyses hexan-3-one + NADPH + O2 + H(+) = ethyl butanoate + NADP(+) + H2O. It catalyses the reaction hexan-3-one + NADPH + O2 + H(+) = propyl propanoate + NADP(+) + H2O. It carries out the reaction heptan-4-one + NADPH + O2 + H(+) = propyl butanoate + NADP(+) + H2O. The catalysed reaction is (2E)-geranial + NADPH + O2 + H(+) = (1E)-2,6-dimethylhepta-1,5-dien-1-yl formate + NADP(+) + H2O. The enzyme catalyses sulcatone + NADPH + O2 + H(+) = 4-methylpent-3-en-1-yl acetate + NADP(+) + H2O. Acts as a Baeyer-Villiger monooxygenase on a broad range of substrates. Catalyzes the insertion of an oxygen atom into a carbon-carbon bond adjacent to a carbonyl, which converts ketones to esters. Active on diverse carbonyl compounds, whereas soft nucleophiles are mostly non- or poorly reactive. In contrast with other forms of FMO it is non- or poorly active on 'classical' substrates such as drugs, pesticides, and dietary components containing soft nucleophilic heteroatoms. Able to oxidize drug molecules bearing a carbonyl group on an aliphatic chain, such as nabumetone and pentoxifylline. Also, in the absence of substrates, shows slow but yet significant NADPH oxidase activity. Acts as a positive modulator of cholesterol biosynthesis as well as glucose homeostasis, promoting metabolic aging via pleiotropic effects. This chain is Flavin-containing monooxygenase 5 (FMO5), found in Oryctolagus cuniculus (Rabbit).